The chain runs to 245 residues: 8-amino-3,8-dideoxy-manno-octulosonate cytidylyltransferase (245 aa).

This sequence belongs to the KdsB family.

It is found in the cytoplasm. The catalysed reaction is 8-amino-3,8-dideoxy-alpha-D-manno-octulosonate + CTP = CMP-8-amino-3,8-dideoxy-alpha-D-manno-oct-2-ulosonate + diphosphate. It participates in bacterial outer membrane biogenesis; lipopolysaccharide biosynthesis. Activates KDO8N (a required 8-carbon sugar) for incorporation into bacterial lipopolysaccharide in the Shewanella genus. This chain is 8-amino-3,8-dideoxy-manno-octulosonate cytidylyltransferase, found in Shewanella pealeana (strain ATCC 700345 / ANG-SQ1).